A 107-amino-acid polypeptide reads, in one-letter code: MATTRVSHVLGFLLWISLLIFVSIGLFGNFSSKPINPFPSPVITLPALYYRPGRRALAVKTFDFTPFLKDLRRSNHRKALPAGGSEIDPRYGVEKRLVPSGPNPLHH.

The N-terminal stretch at 1–25 (MATTRVSHVLGFLLWISLLIFVSIG) is a signal peptide. Asn29 is a glycosylation site (N-linked (GlcNAc...) asparagine). Positions 79 to 107 (ALPAGGSEIDPRYGVEKRLVPSGPNPLHH) are disordered. Positions 87–97 (IDPRYGVEKRL) are enriched in basic and acidic residues. 2 positions are modified to hydroxyproline: Pro99 and Pro102. A glycan (O-linked (Ara...) hydroxyproline) is linked at Pro102.

Belongs to the CLV3/ESR signal peptide family. Post-translationally, the O-glycosylation (arabinosylation) of the hydroxyproline Pro-102 enhances binding affinity of the CLE13p peptide for its receptor. In terms of tissue distribution, mostly expressed in seedlings, roots, flowers, stems and apex, and, to a lower extent, in leaves and siliques.

Its subcellular location is the secreted. The protein localises to the extracellular space. Extracellular signal peptide that regulates cell fate. Represses root apical meristem maintenance. Regulates the transition of protophloem cells from proliferation to differentiation, thus impinging on postembryonic growth capacity of the root meristem; this signaling pathway requires CRN and CLV2. In Arabidopsis thaliana (Mouse-ear cress), this protein is CLAVATA3/ESR (CLE)-related protein 13.